A 962-amino-acid chain; its full sequence is Probable transport protein MmpL9 (962 aa).

The next 12 membrane-spanning stretches (helical) occupy residues 25–45 (LAAI…SVAV), 201–223 (LITG…SIAT), 225–247 (LLIL…FLGY), 256–276 (FVVN…AIFL), 302–322 (ANVI…LSFA), 335–355 (AIGM…IIAI), 383–403 (WPGP…LALP), 768–788 (YDIL…MLMI), 796–816 (LVIV…SVLI), 820–840 (FVGL…LLAV), 867–887 (AMAG…FTMA), and 895–915 (RVIG…TLVV).

The protein belongs to the resistance-nodulation-cell division (RND) (TC 2.A.6) family. MmpL subfamily.

Its subcellular location is the cell membrane. This is Probable transport protein MmpL9 (mmpL9) from Mycobacterium tuberculosis (strain ATCC 25618 / H37Rv).